A 358-amino-acid chain; its full sequence is WAT1-related protein At3g28080 (358 aa).

10 helical membrane-spanning segments follow: residues 12–32 (AVFL…STLF), 42–62 (IYPF…PSLF), 81–101 (IGLL…GIEY), 105–125 (TLAS…AVIF), 137–157 (SVAK…VIFY), 187–207 (WLIG…SFIL), 219–239 (FTVS…IGLV), 245–265 (PSIW…TGII), 283–303 (LYLA…GTIF), and 308–328 (LYLG…VVMW). An EamA domain is found at 27–155 (GLSTLFKVAT…LSLIGAFVVI (129 aa)).

It belongs to the drug/metabolite transporter (DMT) superfamily. Plant drug/metabolite exporter (P-DME) (TC 2.A.7.4) family.

The protein localises to the membrane. This is WAT1-related protein At3g28080 from Arabidopsis thaliana (Mouse-ear cress).